The primary structure comprises 164 residues: Type II secretion system protein M (164 aa).

Residues 1–17 (MNELRQRWQAMSQRERQ) lie on the Cytoplasmic side of the membrane. A helical transmembrane segment spans residues 18–38 (LMVVCAAVLLLCVVYYAILQP). Residues 39 to 164 (WQEREDLWER…RLMLERTDEA (126 aa)) are Periplasmic-facing.

Belongs to the GSP M family. Type II secretion system is composed of four main components: the outer membrane complex, the inner membrane complex, the cytoplasmic secretion ATPase and the periplasm-spanning pseudopilus. Forms homodimers. Interacts with OutL/GspL. Interacts with OutE/GspE and OutF/GspF.

The protein localises to the cell inner membrane. Functionally, inner membrane component of the type II secretion system required for the energy-dependent secretion of extracellular factors such as proteases and toxins from the periplasm. Plays a role in the complex assembly and recruits OutL resulting in a stable complex in the inner membrane. Provides thus a link between the energy-providing OutE protein in the cytoplasm and the rest of the T2SS machinery. The polypeptide is Type II secretion system protein M (outM) (Pectobacterium carotovorum subsp. carotovorum (Erwinia carotovora subsp. carotovora)).